We begin with the raw amino-acid sequence, 391 residues long: uncharacterized protein (391 aa).

WD repeat units follow at residues 137-179 (VNDI…PILA) and 182-222 (PLSS…SAEE).

The protein localises to the cytoplasm. It is found in the nucleus. This is an uncharacterized protein from Schizosaccharomyces pombe (strain 972 / ATCC 24843) (Fission yeast).